A 457-amino-acid chain; its full sequence is ATP synthase subunit beta (457 aa).

147–154 is an ATP binding site; sequence GGAGVGKT.

Belongs to the ATPase alpha/beta chains family. As to quaternary structure, F-type ATPases have 2 components, CF(1) - the catalytic core - and CF(0) - the membrane proton channel. CF(1) has five subunits: alpha(3), beta(3), gamma(1), delta(1), epsilon(1). CF(0) has three main subunits: a(1), b(2) and c(9-12). The alpha and beta chains form an alternating ring which encloses part of the gamma chain. CF(1) is attached to CF(0) by a central stalk formed by the gamma and epsilon chains, while a peripheral stalk is formed by the delta and b chains.

Its subcellular location is the cell inner membrane. The enzyme catalyses ATP + H2O + 4 H(+)(in) = ADP + phosphate + 5 H(+)(out). In terms of biological role, produces ATP from ADP in the presence of a proton gradient across the membrane. The catalytic sites are hosted primarily by the beta subunits. This is ATP synthase subunit beta from Haemophilus influenzae (strain PittEE).